The chain runs to 479 residues: Poly(A) polymerase catalytic subunit (479 aa).

Active-site residues include Asp202 and Asp204. The Ca(2+) site is built by Asp202, Asp204, and Asp253.

This sequence belongs to the poxviridae poly(A) polymerase catalytic subunit family. Heterodimer of a large (catalytic) subunit and a small (regulatory) subunit.

The catalysed reaction is RNA(n) + ATP = RNA(n)-3'-adenine ribonucleotide + diphosphate. Functionally, polymerase that creates the 3'-poly(A) tail of mRNA's. This is Poly(A) polymerase catalytic subunit (OPG063) from Bos taurus (Bovine).